We begin with the raw amino-acid sequence, 258 residues long: Ribonuclease HII (258 aa).

The disordered stretch occupies residues 1–20 (MRVAPSGGPPHHHAMIRATP). Basic residues predominate over residues 10–20 (PHHHAMIRATP). An RNase H type-2 domain is found at 48-236 (WPVAGCDEVG…VVAARERHRA (189 aa)). A divalent metal cation is bound by residues Asp54, Glu55, and Asp145.

This sequence belongs to the RNase HII family. The cofactor is Mn(2+). Mg(2+) serves as cofactor.

Its subcellular location is the cytoplasm. It carries out the reaction Endonucleolytic cleavage to 5'-phosphomonoester.. In terms of biological role, endonuclease that specifically degrades the RNA of RNA-DNA hybrids. The sequence is that of Ribonuclease HII from Nitrobacter winogradskyi (strain ATCC 25391 / DSM 10237 / CIP 104748 / NCIMB 11846 / Nb-255).